The following is a 421-amino-acid chain: Mannose-1-phosphate guanyltransferase alpha-A (421 aa).

The protein belongs to the transferase hexapeptide repeat family.

The catalysed reaction is alpha-D-mannose 1-phosphate + GTP + H(+) = GDP-alpha-D-mannose + diphosphate. It participates in nucleotide-sugar biosynthesis; GDP-alpha-D-mannose biosynthesis; GDP-alpha-D-mannose from alpha-D-mannose 1-phosphate (GTP route): step 1/1. This chain is Mannose-1-phosphate guanyltransferase alpha-A (gmppa-a), found in Xenopus laevis (African clawed frog).